The following is a 195-amino-acid chain: HTH-type transcriptional regulator BetI (195 aa).

The 61-residue stretch at 8-68 (SIRRRQLIDA…ATMRDITSQL (61 aa)) folds into the HTH tetR-type domain. The H-T-H motif DNA-binding region spans 31-50 (TIAQIARRAGVSTGIISHYF).

Its pathway is amine and polyamine biosynthesis; betaine biosynthesis via choline pathway [regulation]. Functionally, repressor involved in the biosynthesis of the osmoprotectant glycine betaine. It represses transcription of the choline transporter BetT and the genes of BetAB involved in the synthesis of glycine betaine. The protein is HTH-type transcriptional regulator BetI of Escherichia coli O127:H6 (strain E2348/69 / EPEC).